A 349-amino-acid polypeptide reads, in one-letter code: Protein RecA (349 aa).

Residue 65 to 72 (GPESSGKT) coordinates ATP.

This sequence belongs to the RecA family.

It is found in the cytoplasm. Its function is as follows. Can catalyze the hydrolysis of ATP in the presence of single-stranded DNA, the ATP-dependent uptake of single-stranded DNA by duplex DNA, and the ATP-dependent hybridization of homologous single-stranded DNAs. It interacts with LexA causing its activation and leading to its autocatalytic cleavage. The sequence is that of Protein RecA from Enterococcus faecium (Streptococcus faecium).